We begin with the raw amino-acid sequence, 156 residues long: Arginine repressor (156 aa).

The protein belongs to the ArgR family.

It localises to the cytoplasm. The protein operates within amino-acid biosynthesis; L-arginine biosynthesis [regulation]. Functionally, regulates arginine biosynthesis genes. The polypeptide is Arginine repressor (Shewanella woodyi (strain ATCC 51908 / MS32)).